A 725-amino-acid polypeptide reads, in one-letter code: Protein ALEX (725 aa).

Disordered stretches follow at residues 1-93 (MSPS…ARAQ), 177-226 (GAIA…PLTD), 256-340 (EPPL…PSQP), 396-481 (PILT…SPLL), 508-528 (PMQV…PLGH), 584-624 (LPGL…AASS), and 638-675 (ATRS…GRPR). Residues 41-51 (HLRRKPCHSRH) are compositionally biased toward basic residues. The segment covering 260–276 (GSTTTPLSIWTAPQSQV) has biased composition (polar residues). 2 stretches are compositionally biased toward basic and acidic residues: residues 297–307 (QLSEKQPRWKE) and 314–326 (RWKE…REGT). Pro residues-rich tracts occupy residues 423 to 442 (PSQP…PGQP) and 459 to 473 (RSLP…PRSP). Low complexity-rich tracts occupy residues 584–598 (LPGL…AAAG) and 643–658 (ATQS…EAAS).

This sequence belongs to the ALEX family. As to quaternary structure, interacts with the N-terminal region of the XLas isoforms of guanine nucleotide-binding protein G(s) subunit alpha.

The protein localises to the cell membrane. It localises to the cell projection. Its subcellular location is the ruffle. Its function is as follows. May inhibit the adenylyl cyclase-stimulating activity of guanine nucleotide-binding protein G(s) subunit alpha which is produced from the same locus in a different open reading frame. This Mus musculus (Mouse) protein is Protein ALEX.